Here is a 427-residue protein sequence, read N- to C-terminus: Mitochondrial distribution and morphology protein 12 (427 aa).

The region spanning 1–387 is the SMP-LTD domain; the sequence is MSFDINWNQL…WPSWICIDMN (387 aa). Residues 81–96 show a composition bias toward basic and acidic residues; the sequence is NDSKDEHLKNHGDGIN. Disordered regions lie at residues 81 to 168 and 387 to 427; these read NDSK…APPL and NDDD…EAGE. Residues 106-133 show a composition bias toward acidic residues; sequence LDDEDEDDEDDDEDDEDEEEEDEDDYDD. Positions 146–161 are enriched in polar residues; sequence LNFNENSTTPSANSFA. The segment covering 387 to 402 has biased composition (acidic residues); that stretch reads NDDDDEEEEEESEDND. Positions 411-427 are enriched in basic and acidic residues; sequence NDGKHGDGRTDETEAGE.

This sequence belongs to the MDM12 family. In terms of assembly, component of the ER-mitochondria encounter structure (ERMES) or MDM complex, composed of MMM1, MDM10, MDM12 and MDM34. An MMM1 homodimer associates with one molecule of MDM12 on each side in a pairwise head-to-tail manner, and the SMP-LTD domains of MMM1 and MDM12 generate a continuous hydrophobic tunnel for phospholipid trafficking.

Its subcellular location is the mitochondrion outer membrane. The protein localises to the endoplasmic reticulum membrane. In terms of biological role, component of the ERMES/MDM complex, which serves as a molecular tether to connect the endoplasmic reticulum (ER) and mitochondria. Components of this complex are involved in the control of mitochondrial shape and protein biogenesis, and function in nonvesicular lipid trafficking between the ER and mitochondria. MDM12 is required for the interaction of the ER-resident membrane protein MMM1 and the outer mitochondrial membrane-resident beta-barrel protein MDM10. The MDM12-MMM1 subcomplex functions in the major beta-barrel assembly pathway that is responsible for biogenesis of all mitochondrial outer membrane beta-barrel proteins, and acts in a late step after the SAM complex. The MDM10-MDM12-MMM1 subcomplex further acts in the TOM40-specific pathway after the action of the MDM12-MMM1 complex. Essential for establishing and maintaining the structure of mitochondria and maintenance of mtDNA nucleoids. The polypeptide is Mitochondrial distribution and morphology protein 12 (Candida albicans (strain WO-1) (Yeast)).